Consider the following 383-residue polypeptide: Succinyl-diaminopimelate desuccinylase (383 aa).

His79 is a Zn(2+) binding site. The active site involves Asp81. Zn(2+) is bound at residue Asp110. Glu141 functions as the Proton acceptor in the catalytic mechanism. Residues Glu142, Glu170, and His355 each contribute to the Zn(2+) site.

Belongs to the peptidase M20A family. DapE subfamily. In terms of assembly, homodimer. Zn(2+) serves as cofactor. Requires Co(2+) as cofactor.

It carries out the reaction N-succinyl-(2S,6S)-2,6-diaminopimelate + H2O = (2S,6S)-2,6-diaminopimelate + succinate. Its pathway is amino-acid biosynthesis; L-lysine biosynthesis via DAP pathway; LL-2,6-diaminopimelate from (S)-tetrahydrodipicolinate (succinylase route): step 3/3. In terms of biological role, catalyzes the hydrolysis of N-succinyl-L,L-diaminopimelic acid (SDAP), forming succinate and LL-2,6-diaminopimelate (DAP), an intermediate involved in the bacterial biosynthesis of lysine and meso-diaminopimelic acid, an essential component of bacterial cell walls. The polypeptide is Succinyl-diaminopimelate desuccinylase (Helicobacter pylori (strain Shi470)).